A 522-amino-acid polypeptide reads, in one-letter code: MEELQGYLEKDRSRQQPFLYPLLFQEYIYALAHDRGLNDSIFDKPVEVFGYDSKSSLALVKRLIIRIYQQNYFLSAVRSFNQNRFLGHHHNNFFYSHFDSQMISEGFAIIVEILFSLRLVSFFEKKEIKKFHHLRSIHSIFPFLEDKLLHLNYVSDILIPHPIHMEILVQILQCWIPDVPLLHFLRFFLHKYHNWNSFLITPKKSIYVFSKENQRLFRFLYNSYVSECEFLLVFLRKQSSYLRLTSFGLFIERRHFYVKIEHLHMQHLLFIVVCRDYFHGTLWFFKDPSMHYVRCQGKAILASKGTHLLMKKWKYNFVNLWQYYFHFWYQSYRIRINQLANYSFYFWGYLSSLLKNYSTVKNKMLENSFLIDTVTNKFEATVPVIFLIGSLSKAQFCTVSGHPISKPTWTDLSDSDIIERFGRMCRNLSHYHSGSSKKQGLYRIKYILRLSCARTLARKHKSTVRTFLXRLGSGLLEEFFTEXDQALSLILPKKIPFIFHGSHKKHIWYLDIIRMNDLVNHS.

It belongs to the intron maturase 2 family. MatK subfamily.

It is found in the plastid. The protein resides in the chloroplast. In terms of biological role, usually encoded in the trnK tRNA gene intron. Probably assists in splicing its own and other chloroplast group II introns. This is Maturase K from Tigridia pavonia (Mexican shell flower).